A 402-amino-acid polypeptide reads, in one-letter code: MDAATTRVGLTDLTFRLLRESFADAVSWVAKNLPARPAVPVLSGVLLTGSDNGLTISGFDYEVSAEAQVGAEIVSPGSVLVSGRLLSDITRALPNKPVDVHVEGNRVALTCGNARFSLPTMPVEDYPTLPTLPEETGLLPAELFAEAISQVAIAAGRDDTLPMLTGIRVEILGETVVLAATDRFRLAVRELKWSASSPDIEAAVLVPAKTLAEAAKAGIGGSDVRLSLGTGPGVGKDGLLGISGNGKRSTTRLLDAEFPKFRQLLPTEHTAVATMDVAELIEAIKLVALVADRGAQVRMEFADGSVRLSAGADDVGRAEEDLVVDYAGEPLTIAFNPTYLTDGLSSLRSERVSFGFTTAGKPALLRPVSGDDRPVAGLNGNGPFPAVSTDYVYLLMPVRLPG.

The protein belongs to the beta sliding clamp family. In terms of assembly, forms a ring-shaped head-to-tail homodimer around DNA which binds and tethers DNA polymerases and other proteins to the DNA. The DNA replisome complex has a single clamp-loading complex (3 tau and 1 each of delta, delta', psi and chi subunits) which binds 3 Pol III cores (1 core on the leading strand and 2 on the lagging strand) each with a beta sliding clamp dimer. Additional proteins in the replisome are other copies of gamma, psi and chi, Ssb, DNA helicase and RNA primase.

Its subcellular location is the cytoplasm. Functionally, confers DNA tethering and processivity to DNA polymerases and other proteins. Acts as a clamp, forming a ring around DNA (a reaction catalyzed by the clamp-loading complex) which diffuses in an ATP-independent manner freely and bidirectionally along dsDNA. Initially characterized for its ability to contact the catalytic subunit of DNA polymerase III (Pol III), a complex, multichain enzyme responsible for most of the replicative synthesis in bacteria; Pol III exhibits 3'-5' exonuclease proofreading activity. The beta chain is required for initiation of replication as well as for processivity of DNA replication. In Mycobacterium tuberculosis (strain CDC 1551 / Oshkosh), this protein is Beta sliding clamp (dnaN).